The primary structure comprises 426 residues: Histidine--tRNA ligase (426 aa).

The protein belongs to the class-II aminoacyl-tRNA synthetase family. Homodimer.

It is found in the cytoplasm. The catalysed reaction is tRNA(His) + L-histidine + ATP = L-histidyl-tRNA(His) + AMP + diphosphate + H(+). This Streptococcus sanguinis (strain SK36) protein is Histidine--tRNA ligase.